The chain runs to 115 residues: Superoxide reductase (115 aa).

Residues Glu-14, His-16, His-41, His-47, Cys-102, and His-105 each contribute to the Fe cation site.

It belongs to the desulfoferrodoxin family. Homotetramer. It depends on Fe cation as a cofactor.

The enzyme catalyses reduced [rubredoxin] + superoxide + 2 H(+) = oxidized [rubredoxin] + H2O2. Its function is as follows. Uses electrons from reduced NADP, by way of rubredoxin and an oxidoreductase, to catalyze the reduction of superoxide to hydrogen peroxide. In Thermococcus kodakarensis (strain ATCC BAA-918 / JCM 12380 / KOD1) (Pyrococcus kodakaraensis (strain KOD1)), this protein is Superoxide reductase (sorA).